We begin with the raw amino-acid sequence, 184 residues long: UPF0149 protein PSPA7_5968 (184 aa).

The protein belongs to the UPF0149 family.

The polypeptide is UPF0149 protein PSPA7_5968 (Pseudomonas paraeruginosa (strain DSM 24068 / PA7) (Pseudomonas aeruginosa (strain PA7))).